The chain runs to 141 residues: Small ribosomal subunit protein bS6 (141 aa).

A disordered region spans residues 110–141 (SRTKVSDQPAAVEAAEAPAAPAAQEESAPASA). The span at 117–141 (QPAAVEAAEAPAAPAAQEESAPASA) shows a compositional bias: low complexity.

Belongs to the bacterial ribosomal protein bS6 family.

Binds together with bS18 to 16S ribosomal RNA. The protein is Small ribosomal subunit protein bS6 of Acidobacterium capsulatum (strain ATCC 51196 / DSM 11244 / BCRC 80197 / JCM 7670 / NBRC 15755 / NCIMB 13165 / 161).